The sequence spans 256 residues: Imidazole glycerol phosphate synthase subunit HisF (256 aa).

Residues D12 and D131 contribute to the active site.

It belongs to the HisA/HisF family. Heterodimer of HisH and HisF.

The protein resides in the cytoplasm. It carries out the reaction 5-[(5-phospho-1-deoxy-D-ribulos-1-ylimino)methylamino]-1-(5-phospho-beta-D-ribosyl)imidazole-4-carboxamide + L-glutamine = D-erythro-1-(imidazol-4-yl)glycerol 3-phosphate + 5-amino-1-(5-phospho-beta-D-ribosyl)imidazole-4-carboxamide + L-glutamate + H(+). The protein operates within amino-acid biosynthesis; L-histidine biosynthesis; L-histidine from 5-phospho-alpha-D-ribose 1-diphosphate: step 5/9. Functionally, IGPS catalyzes the conversion of PRFAR and glutamine to IGP, AICAR and glutamate. The HisF subunit catalyzes the cyclization activity that produces IGP and AICAR from PRFAR using the ammonia provided by the HisH subunit. The chain is Imidazole glycerol phosphate synthase subunit HisF from Pseudomonas syringae pv. syringae (strain B728a).